The sequence spans 203 residues: Glycerol-3-phosphate acyltransferase (203 aa).

A run of 4 helical transmembrane segments spans residues 6–26 (LTLL…AVLV), 82–102 (AISL…PIFF), 118–138 (APIG…LLLI), and 141–161 (YSSL…WWLD).

It belongs to the PlsY family. Probably interacts with PlsX.

It is found in the cell inner membrane. The catalysed reaction is an acyl phosphate + sn-glycerol 3-phosphate = a 1-acyl-sn-glycero-3-phosphate + phosphate. The protein operates within lipid metabolism; phospholipid metabolism. In terms of biological role, catalyzes the transfer of an acyl group from acyl-phosphate (acyl-PO(4)) to glycerol-3-phosphate (G3P) to form lysophosphatidic acid (LPA). This enzyme utilizes acyl-phosphate as fatty acyl donor, but not acyl-CoA or acyl-ACP. The polypeptide is Glycerol-3-phosphate acyltransferase (Shewanella putrefaciens (strain CN-32 / ATCC BAA-453)).